A 66-amino-acid polypeptide reads, in one-letter code: MAKGKDVRVTIILECTSCVRNDIKKESAGISRYITQKNRHNTPSRLELRKFCPYCFKHTIHGEIKK.

It belongs to the bacterial ribosomal protein bL33 family.

It is found in the plastid. The protein localises to the chloroplast. This chain is Large ribosomal subunit protein bL33c, found in Arabis hirsuta (Hairy rock-cress).